The primary structure comprises 404 residues: Cysteine desulfurase IscS (404 aa).

Residues 75–76, asparagine 155, glutamine 183, and 203–205 each bind pyridoxal 5'-phosphate; these read AT and SAH. An N6-(pyridoxal phosphate)lysine modification is found at lysine 206. Residue threonine 243 participates in pyridoxal 5'-phosphate binding. Residue cysteine 328 is the Cysteine persulfide intermediate of the active site. Position 328 (cysteine 328) interacts with [2Fe-2S] cluster.

The protein belongs to the class-V pyridoxal-phosphate-dependent aminotransferase family. NifS/IscS subfamily. In terms of assembly, homodimer. Forms a heterotetramer with IscU, interacts with other sulfur acceptors. Pyridoxal 5'-phosphate serves as cofactor.

The protein localises to the cytoplasm. The enzyme catalyses (sulfur carrier)-H + L-cysteine = (sulfur carrier)-SH + L-alanine. It functions in the pathway cofactor biosynthesis; iron-sulfur cluster biosynthesis. Master enzyme that delivers sulfur to a number of partners involved in Fe-S cluster assembly, tRNA modification or cofactor biosynthesis. Catalyzes the removal of elemental sulfur atoms from cysteine to produce alanine. Functions as a sulfur delivery protein for Fe-S cluster synthesis onto IscU, an Fe-S scaffold assembly protein, as well as other S acceptor proteins. The chain is Cysteine desulfurase IscS from Shewanella sediminis (strain HAW-EB3).